The primary structure comprises 763 residues: Dual specificity tyrosine-phosphorylation-regulated kinase 1A (763 aa).

Ser14 carries the post-translational modification Phosphoserine. The tract at residues 33-56 (QMPHSHQYSDRRQPNISDQQVSAL) is disordered. The segment covering 46 to 56 (PNISDQQVSAL) has biased composition (polar residues). Tyr111 carries the phosphotyrosine; by autocatalysis modification. The disordered stretch occupies residues 115-136 (KKRRHQQGQGDDSSHKKERKVY). The Bipartite nuclear localization signal motif lies at 117-134 (RRHQQGQGDDSSHKKERK). A Phosphotyrosine; by autocatalysis modification is found at Tyr140. The residue at position 145 (Tyr145) is a Phosphotyrosine. Residue Tyr159 is modified to Phosphotyrosine; by autocatalysis. The region spanning 159 to 479 (YEIDSLIGKG…PYYALQHSFF (321 aa)) is the Protein kinase domain. 165-173 (IGKGSFGQV) lines the ATP pocket. Position 177 is a phosphotyrosine; by autocatalysis (Tyr177). Lys188 provides a ligand contact to ATP. Phosphotyrosine; by autocatalysis is present on Tyr219. 238 to 241 (FEML) is a binding site for ATP. Catalysis depends on Asp287, which acts as the Proton acceptor. Ser310 carries the phosphoserine; by autocatalysis modification. Phosphotyrosine; by autocatalysis is present on residues Tyr319 and Tyr321. Thr402 carries the post-translational modification Phosphothreonine; by autocatalysis. Residues 408 to 442 (TKDGKREYKPPGTRKLHNILGVETGGPGGRRAGES) are disordered. Tyr449 is subject to Phosphotyrosine; by autocatalysis. Polar residues predominate over residues 485 to 501 (EGTNTSNSVSTSPAMEQ). Disordered stretches follow at residues 485–540 (EGTN…HSGG), 596–679 (NALH…GNQA), and 744–763 (DREESPMTGVCVQQSPVASS). The span at 502-525 (SQSSGTTSSTSSSSGGSSGTSNSG) shows a compositional bias: low complexity. A phosphoserine mark is found at Ser529 and Ser538. The segment at 595–625 (QNALHHHHGNSSHHHHHHHHHHHHHGQQALG) is histidine-rich domain (HRD). Over residues 598–620 (LHHHHGNSSHHHHHHHHHHHHHG) the composition is skewed to basic residues. The segment covering 634–645 (NSPTNSSSTQDS) has biased composition (polar residues). A compositionally biased stretch (low complexity) spans 654–672 (SMTSLSSSTTSSSTSSSST). Phosphoserine is present on residues Ser748 and Ser758. The span at 754–763 (CVQQSPVASS) shows a compositional bias: polar residues.

Belongs to the protein kinase superfamily. CMGC Ser/Thr protein kinase family. MNB/DYRK subfamily. As to quaternary structure, interacts with RAD54L2/ARIP4. Interacts with CRY2. Interacts with RANBP9. Interacts with WDR68. Interacts with SIRT1. Can also autophosphorylate on serine and threonine residues (in vitro). Autophosphorylated on numerous tyrosine residues. Detected in brain (at protein level). Ubiquitous.

Its subcellular location is the nucleus speckle. The catalysed reaction is L-seryl-[protein] + ATP = O-phospho-L-seryl-[protein] + ADP + H(+). It catalyses the reaction L-threonyl-[protein] + ATP = O-phospho-L-threonyl-[protein] + ADP + H(+). It carries out the reaction L-tyrosyl-[protein] + ATP = O-phospho-L-tyrosyl-[protein] + ADP + H(+). The enzyme catalyses [DNA-directed RNA polymerase] + ATP = phospho-[DNA-directed RNA polymerase] + ADP + H(+). Its activity is regulated as follows. Inhibited by RANBP9. Inhibited by harmine, leucettamine B and leucettine L41. Dual-specificity kinase which possesses both serine/threonine and tyrosine kinase activities. Exhibits a substrate preference for proline at position P+1 and arginine at position P-3. Plays an important role in double-strand breaks (DSBs) repair following DNA damage. Mechanistically, phosphorylates RNF169 and increases its ability to block accumulation of TP53BP1 at the DSB sites thereby promoting homologous recombination repair (HRR). Also acts as a positive regulator of transcription by acting as a CTD kinase that mediates phosphorylation of the CTD (C-terminal domain) of the large subunit of RNA polymerase II (RNAP II) POLR2A. May play a role in a signaling pathway regulating nuclear functions of cell proliferation. Modulates alternative splicing by phosphorylating the splice factor SRSF6. Has pro-survival function and negatively regulates the apoptotic process. Promotes cell survival upon genotoxic stress through phosphorylation of SIRT1. This in turn inhibits p53/TP53 activity and apoptosis. Phosphorylates SEPTIN4, SEPTIN5 and SF3B1 at 'Thr-434'. The protein is Dual specificity tyrosine-phosphorylation-regulated kinase 1A (Dyrk1a) of Rattus norvegicus (Rat).